Consider the following 241-residue polypeptide: Uracil-DNA glycosylase (241 aa).

Aspartate 71 acts as the Proton acceptor in catalysis. A disordered region spans residues 221–241 (ISPIDWSLPPRNELDTTSAGA).

The protein belongs to the uracil-DNA glycosylase (UDG) superfamily. UNG family.

It is found in the cytoplasm. It carries out the reaction Hydrolyzes single-stranded DNA or mismatched double-stranded DNA and polynucleotides, releasing free uracil.. Functionally, excises uracil residues from the DNA which can arise as a result of misincorporation of dUMP residues by DNA polymerase or due to deamination of cytosine. The protein is Uracil-DNA glycosylase of Xanthomonas oryzae pv. oryzae (strain MAFF 311018).